The sequence spans 199 residues: NAD(P)H dehydrogenase (quinone) (199 aa).

Residues 4 to 190 enclose the Flavodoxin-like domain; it reads ILVLYYSMYG…TIARYQGEHV (187 aa). Residues 10–15 and 79–81 contribute to the FMN site; these read SMYGHI and TRF. Y12 contributes to the NAD(+) binding site. Residue W99 participates in substrate binding. FMN-binding positions include 114–119 and H134; that span reads STGTGG.

The protein belongs to the WrbA family. FMN is required as a cofactor.

It catalyses the reaction a quinone + NADH + H(+) = a quinol + NAD(+). The enzyme catalyses a quinone + NADPH + H(+) = a quinol + NADP(+). This is NAD(P)H dehydrogenase (quinone) from Serratia proteamaculans (strain 568).